Here is a 535-residue protein sequence, read N- to C-terminus: T-complex protein 1 subunit beta (535 aa).

Position 1 is an N-acetylmethionine (Met-1). N-acetylalanine is present on Ala-2. Ser-3 carries the post-translational modification Phosphoserine. Lys-13 is modified (N6-acetyllysine). ADP is bound at residue Gly-44. Gly-44 lines the ATP pocket. At Ser-60 the chain carries Phosphoserine. Residue Asp-97 participates in Mg(2+) binding. Positions 98, 99, 100, and 101 each coordinate ADP. Residues Gly-98, Thr-99, and Thr-100 each contribute to the ATP site. An N6-acetyllysine modification is found at Lys-154. Residues Ser-168 and Ser-169 each contribute to the ADP site. Lys-181 is modified (N6-acetyllysine). A Glycyl lysine isopeptide (Lys-Gly) (interchain with G-Cter in SUMO2) cross-link involves residue Lys-248. Phosphoserine is present on Ser-260. Thr-261 is modified (phosphothreonine). Residues Gly-410, Glu-495, and Lys-500 each coordinate ADP. Positions 495 and 500 each coordinate ATP.

It belongs to the TCP-1 chaperonin family. Component of the chaperonin-containing T-complex (TRiC), a hexadecamer composed of two identical back-to-back stacked rings enclosing a protein folding chamber. Each ring is made up of eight different subunits: TCP1/CCT1, CCT2, CCT3, CCT4, CCT5, CCT6A/CCT6, CCT7, CCT8. Interacts with PACRG. Interacts with FLCN. Interacts with DLEC1. Interacts with SVEP1.

It is found in the cytoplasm. It catalyses the reaction ATP + H2O = ADP + phosphate + H(+). Component of the chaperonin-containing T-complex (TRiC), a molecular chaperone complex that assists the folding of actin, tubulin and other proteins upon ATP hydrolysis. The TRiC complex mediates the folding of WRAP53/TCAB1, thereby regulating telomere maintenance. As part of the TRiC complex may play a role in the assembly of BBSome, a complex involved in ciliogenesis regulating transports vesicles to the cilia. The protein is T-complex protein 1 subunit beta of Homo sapiens (Human).